A 348-amino-acid polypeptide reads, in one-letter code: Farnesoic acid carboxyl-O-methyltransferase (348 aa).

Tyr16 provides a ligand contact to S-adenosyl-L-methionine. Residues Tyr16 and His19–Gln23 contribute to the substrate site. S-adenosyl-L-methionine contacts are provided by residues Gly57, Gly57–Cys58, Asn63, Phe94–Ser97, Ser123–Phe125, and Ser140–Ser142. Tyr141–Phe145 is a substrate binding site. Mg(2+)-binding residues include Asn162, Asp247, and Phe249.

It belongs to the methyltransferase superfamily. SABATH family. As to quaternary structure, homodimer. It depends on Mg(2+) as a cofactor. Mostly expressed in leaves and, at very low levels, in roots, stems, flowers and siliques.

It catalyses the reaction (2E,6E)-farnesoate + S-adenosyl-L-methionine = methyl (2E,6E)-farnesoate + S-adenosyl-L-homocysteine. The catalysed reaction is juvenile hormone III carboxylate + S-adenosyl-L-methionine = juvenile hormone III + S-adenosyl-L-homocysteine. It functions in the pathway sesquiterpene biosynthesis. Activated by Mn(2+) ions. Strongly inhibited by Cu(2+), Zn(2+), Fe(3+) and Fe(2+) ions. Moderately inhibited by Na(+) and Ca(2+) ions. Rapidly degraded at temperatures above 40 degrees Celsius. In terms of biological role, may catalyze the production of the insect juvenile hormone methyl farnesoate (MeFA) to trigger defense against insect herbivory. The chain is Farnesoic acid carboxyl-O-methyltransferase from Arabidopsis thaliana (Mouse-ear cress).